The sequence spans 275 residues: NH(3)-dependent NAD(+) synthetase (275 aa).

Residue 50–57 participates in ATP binding; the sequence is GISGGVDS. Asp56 is a binding site for Mg(2+). Residue Arg147 participates in deamido-NAD(+) binding. ATP is bound at residue Thr167. Glu172 contributes to the Mg(2+) binding site. Positions 180 and 187 each coordinate deamido-NAD(+). 2 residues coordinate ATP: Lys196 and Thr218. 267–268 serves as a coordination point for deamido-NAD(+); it reads HK.

This sequence belongs to the NAD synthetase family. Homodimer.

It carries out the reaction deamido-NAD(+) + NH4(+) + ATP = AMP + diphosphate + NAD(+) + H(+). Its pathway is cofactor biosynthesis; NAD(+) biosynthesis; NAD(+) from deamido-NAD(+) (ammonia route): step 1/1. Catalyzes the ATP-dependent amidation of deamido-NAD to form NAD. Uses ammonia as a nitrogen source. The polypeptide is NH(3)-dependent NAD(+) synthetase (Pseudomonas savastanoi pv. phaseolicola (strain 1448A / Race 6) (Pseudomonas syringae pv. phaseolicola (strain 1448A / Race 6))).